Consider the following 224-residue polypeptide: V-type ATP synthase subunit D (224 aa).

Residues 190–224 (REAGYTQKKIKAKIEGKNKEAREAAAATSHGSAAD) form a disordered region. The span at 201-212 (AKIEGKNKEARE) shows a compositional bias: basic and acidic residues. Residues 213–224 (AAAATSHGSAAD) show a composition bias toward low complexity.

The protein belongs to the V-ATPase D subunit family.

Its function is as follows. Produces ATP from ADP in the presence of a proton gradient across the membrane. The protein is V-type ATP synthase subunit D (atpD) of Deinococcus radiodurans (strain ATCC 13939 / DSM 20539 / JCM 16871 / CCUG 27074 / LMG 4051 / NBRC 15346 / NCIMB 9279 / VKM B-1422 / R1).